We begin with the raw amino-acid sequence, 439 residues long: tRNA(Ile)-lysidine synthase (439 aa).

25–30 (SGGLDS) lines the ATP pocket.

The protein belongs to the tRNA(Ile)-lysidine synthase family.

It localises to the cytoplasm. It catalyses the reaction cytidine(34) in tRNA(Ile2) + L-lysine + ATP = lysidine(34) in tRNA(Ile2) + AMP + diphosphate + H(+). In terms of biological role, ligates lysine onto the cytidine present at position 34 of the AUA codon-specific tRNA(Ile) that contains the anticodon CAU, in an ATP-dependent manner. Cytidine is converted to lysidine, thus changing the amino acid specificity of the tRNA from methionine to isoleucine. In Edwardsiella ictaluri (strain 93-146), this protein is tRNA(Ile)-lysidine synthase.